We begin with the raw amino-acid sequence, 468 residues long: UDP-N-acetylmuramate--L-alanine ligase (468 aa).

122–128 (GSHGKTT) is a binding site for ATP.

This sequence belongs to the MurCDEF family.

It localises to the cytoplasm. The catalysed reaction is UDP-N-acetyl-alpha-D-muramate + L-alanine + ATP = UDP-N-acetyl-alpha-D-muramoyl-L-alanine + ADP + phosphate + H(+). It participates in cell wall biogenesis; peptidoglycan biosynthesis. In terms of biological role, cell wall formation. In Synechococcus sp. (strain CC9902), this protein is UDP-N-acetylmuramate--L-alanine ligase.